Reading from the N-terminus, the 309-residue chain is Vomeronasal type-1 receptor 52 (309 aa).

Residues 1–19 lie on the Extracellular side of the membrane; that stretch reads MNKDHTLYCSVYIRNAFFS. Residues 20–40 traverse the membrane as a helical segment; the sequence is EIGIGISANSCLLLFHTFMFI. Over 41–49 the chain is Cytoplasmic; that stretch reads RGHRPRLTD. The helical transmembrane segment at 50–70 threads the bilayer; the sequence is LPIGFVALIHLVMLLLAAYIT. Topologically, residues 71–93 are extracellular; the sequence is EDFFMSSGGWDDITCKLVIFLHR. Cys85 and Cys172 are oxidised to a cystine. The chain crosses the membrane as a helical span at residues 94–114; that stretch reads FFRSLSVCATCLLSVFQAIIL. The Cytoplasmic segment spans residues 115 to 134; the sequence is CPQSSHLAKLKQNSPHQLSY. The helical transmembrane segment at 135–155 threads the bilayer; it reads FFIFLSIFYTSISSHILIAAI. The Extracellular segment spans residues 156–187; sequence PTQNITFVNLIYITNSCSFLPLSSSMQHTFST. Asn159 carries an N-linked (GlcNAc...) asparagine glycan. A helical membrane pass occupies residues 188–208; the sequence is LLAFRNVFVIGLMGLSTCYMA. Residues 209–238 are Cytoplasmic-facing; sequence TLLCRHKTRSQRLQNSKLSPKATPEQRALR. A helical membrane pass occupies residues 239–259; that stretch reads TILMLMSFFLLMSTFDSIISY. The Extracellular portion of the chain corresponds to 260 to 268; sequence SRTILQGNP. Residues 269–289 form a helical membrane-spanning segment; it reads LPFCFQILVAHSYAAVSPLLV. At 290–309 the chain is on the cytoplasmic side; the sequence is LSNEKRITNLLISMYEKIVL.

This sequence belongs to the G-protein coupled receptor 1 family.

It localises to the cell membrane. In terms of biological role, putative pheromone receptor implicated in the regulation of social and reproductive behavior. The sequence is that of Vomeronasal type-1 receptor 52 (Vmn1r52) from Mus musculus (Mouse).